A 519-amino-acid chain; its full sequence is FAD-dependent monooxygenase macF (519 aa).

The N-terminal stretch at methionine 1 to alanine 20 is a signal peptide. The FAD-binding PCMH-type domain maps to cysteine 88–glycine 262. Histidine 125 is modified (pros-8alpha-FAD histidine).

It belongs to the oxygen-dependent FAD-linked oxidoreductase family.

Its pathway is secondary metabolite biosynthesis; terpenoid biosynthesis. Its function is as follows. FAD-dependent monooxygenase; part of the gene cluster that mediates the biosynthesis of macrophorins, isoprenoid epoxycyclohexenones containing cyclized drimane moieties. The first step of the pathway is the synthesis of 6-methylsalicylic acid (6-MSA) by the polyketide synthase macA. 6-MSA is then converted to m-cresol by the decarboxylase macB. The cytochrome P450 monooxygenase macC then catalyzes the oxidation of m-cresol to toluquinol. Epoxidation of toluquinol is then performed by the short chain dehydrogenase macD, with the help of macE, and a further prenylation by macG leads to 7-deacetoxyyanuthone A. The next step is the hydroxylation of C-22 of 7-deacetoxyyanuthone A by the cytochrome P450 monooxygenase macH to yield 22-deacetylyanuthone A. O-Mevalon transferase macI then attaches mevalon to the hydroxyl group of 22-deacetylyanuthone A to produce yanuthone E. The terpene cyclase macJ catalyzes the cyclization of 22-deacetylyanuthone A to macrophorin A. MacJ is also able to catalyze cyclization of yanuthone E and 7-deacetoxyyanuthone A to their corresponding macrophorins. The macJ products can be further modified by macH and macJ, as well as by the FAD-dependent monooxygenase macF, to produce additional macrophorins, including 4'-oxomacrophorin A, 4'-oxomacrophorin D and 4'-oxomacrophorin E. The sequence is that of FAD-dependent monooxygenase macF from Penicillium terrestre.